Here is a 155-residue protein sequence, read N- to C-terminus: FUN14 domain-containing protein 1 (155 aa).

The Cytoplasmic segment spans residues 1 to 47 (MATRNPPPQDYESDDDSYEVLDLTEYARRHQWWNRVFGHSSGPMVEK). Ser13 is modified (phosphoserine; by CK2). Ser17 is subject to Phosphoserine; by ULK1. Phosphotyrosine; by SRC is present on Tyr18. Residues 18 to 21 (YEVL) carry the YXXL motif. A helical transmembrane segment spans residues 48-68 (YSVATQIVMGGVTGWCAGFLF). Residues 69–74 (QKVGKL) lie on the Mitochondrial intermembrane side of the membrane. Residues 75–95 (AATAVGGGFLLLQIASHSGYV) form a helical membrane-spanning segment. The Cytoplasmic segment spans residues 96 to 133 (QIDWKRVEKDVNKAKRQIKKRANKAAPEINNLIEEATE). A Glycyl lysine isopeptide (Lys-Gly) (interchain with G-Cter in ubiquitin) cross-link involves residue Lys119. Residues 134 to 154 (FIKQNIVISSGFVGGFLLGLA) form a helical membrane-spanning segment. Ser155 is a topological domain (mitochondrial intermembrane).

The protein belongs to the FUN14 family. In terms of assembly, interacts (via YXXL motif) with MAP1 LC3 family proteins MAP1LC3A, MAP1LC3B and GABARAP. Interacts with DNM1L/DPR1. Interacts with GPX4. In terms of processing, phosphorylation at Ser-13 by CK2 and at Tyr-18 by SRC inhibits activation of mitophagy. Following hypoxia, dephosphorylated at Tyr-18, leading to interaction with MAP1 LC3 family proteins and triggering mitophagy. Dephosphorylation is mediated by PGAM5. Phosphorylated by ULK1 at Ser-17 which enhances FUNDC1 binding to LC3. Ubiquitinated on Lys-119. Deubiquitinated by USP19; leading to hypoxia-induced DRP1 oligomerization and GTPase activity. In terms of tissue distribution, widely expressed.

The protein resides in the mitochondrion outer membrane. Functionally, integral mitochondrial outer-membrane protein that mediates the formation of mitochondria-associated endoplasmic reticulum membranes (MAMs). In turn, mediates angiogenesis and neoangiogenesis through interference with intracellular Ca(2+) communication and regulation of the vascular endothelial growth factor receptor KDR/VEGFR2 expression at both mRNA and protein levels. Also acts as an activator of hypoxia-induced mitophagy, an important mechanism for mitochondrial quality and homeostasis, by interacting with and recruiting LC3 protein family to mitochondria. Mechanistically, recruits DRP1 at ER-mitochondria contact sites leading to DRP1 oligomerization and GTPase activity to facilitate mitochondrial fission during hypoxia. Additionally, plays a role in hepatic ferroptosis by interacting directly with glutathione peroxidase/GPX4 to facilitate its recruitment into mitochondria through TOM/TIM complex where it is degraded by mitophagy. In Homo sapiens (Human), this protein is FUN14 domain-containing protein 1 (FUNDC1).